Consider the following 211-residue polypeptide: Probable calcium-binding protein CML11 (211 aa).

2 disordered regions span residues 1 to 22 (MSEP…AAAT) and 40 to 60 (SCSA…LGDD). Residues 44–53 (QQQQQQQQQQ) are compositionally biased toward low complexity. EF-hand domains lie at 60–95 (DQLG…LGLK), 96–131 (PSTD…ELLY), 136–171 (YSED…LGHA), and 172–207 (LTVK…AAFD). The Ca(2+) site is built by Asp-73, Asn-75, Asp-77, Ser-79, Glu-84, Asp-109, Asn-111, Asn-113, Glu-120, Asp-149, Asp-151, Asn-153, Glu-160, Asp-185, Asp-187, Asp-189, Arg-191, and Glu-196.

Potential calcium sensor. This Oryza sativa subsp. japonica (Rice) protein is Probable calcium-binding protein CML11 (CML11).